A 554-amino-acid polypeptide reads, in one-letter code: Hyaluronan synthase 3 (554 aa).

At methionine 1–serine 15 the chain is on the cytoplasmic side. A helical membrane pass occupies residues leucine 16–isoleucine 36. Residues histidine 37 to serine 44 lie on the Extracellular side of the membrane. The helical transmembrane segment at phenylalanine 45–leucine 65 threads the bilayer. The Cytoplasmic portion of the chain corresponds to glutamate 66–leucine 378. A helical membrane pass occupies residues tryptophan 379 to isoleucine 399. Residues glutamine 400–asparagine 409 lie on the Extracellular side of the membrane. Residues isoleucine 410 to phenylalanine 430 form a helical membrane-spanning segment. Residues leucine 431 to serine 441 lie on the Cytoplasmic side of the membrane. Residues leucine 442–isoleucine 462 traverse the membrane as a helical segment. Asparagine 463 carries N-linked (GlcNAc...) asparagine glycosylation. Topologically, residues asparagine 463–threonine 474 are extracellular. A helical transmembrane segment spans residues isoleucine 475–glycine 495. Topologically, residues leucine 496–serine 516 are cytoplasmic. The chain crosses the membrane as a helical span at residues glycine 517 to alanine 537. Residues arginine 538–valine 554 lie on the Extracellular side of the membrane.

Belongs to the NodC/HAS family. Mg(2+) is required as a cofactor. Post-translationally, O-GlcNAcylation increases the hyaluronan synthase activity, HAS3 stability and its plasma membrane residence. The concentration of UDP-GlcNAc controls the level of O-GlcNAc modification.

It is found in the cell membrane. The protein localises to the golgi apparatus membrane. It localises to the golgi apparatus. The protein resides in the trans-Golgi network membrane. Its subcellular location is the cytoplasmic vesicle. It carries out the reaction [hyaluronan](n) + UDP-N-acetyl-alpha-D-glucosamine = N-acetyl-beta-D-glucosaminyl-(1-&gt;4)-[hyaluronan](n) + UDP + H(+). It catalyses the reaction N-acetyl-beta-D-glucosaminyl-(1-&gt;4)-[hyaluronan](n) + UDP-alpha-D-glucuronate = [hyaluronan](n+1) + UDP + H(+). The protein operates within glycan biosynthesis; hyaluronan biosynthesis. Catalyzes the addition of GlcNAc or GlcUA monosaccharides to the nascent hyaluronan polymer. Therefore, it is essential to hyaluronan synthesis a major component of most extracellular matrices that has a structural role in tissues architectures and regulates cell adhesion, migration and differentiation. This is one of three isoenzymes responsible for cellular hyaluronan synthesis. In Mus musculus (Mouse), this protein is Hyaluronan synthase 3 (Has3).